A 153-amino-acid polypeptide reads, in one-letter code: Aspartate carbamoyltransferase regulatory chain (153 aa).

Residues C109, C114, C138, and C141 each contribute to the Zn(2+) site.

It belongs to the PyrI family. In terms of assembly, contains catalytic and regulatory chains. The cofactor is Zn(2+).

In terms of biological role, involved in allosteric regulation of aspartate carbamoyltransferase. The chain is Aspartate carbamoyltransferase regulatory chain from Enterobacter sp. (strain 638).